The primary structure comprises 340 residues: Phosphate acyltransferase (340 aa).

This sequence belongs to the PlsX family. As to quaternary structure, homodimer. Probably interacts with PlsY.

The protein localises to the cytoplasm. It carries out the reaction a fatty acyl-[ACP] + phosphate = an acyl phosphate + holo-[ACP]. Its pathway is lipid metabolism; phospholipid metabolism. Catalyzes the reversible formation of acyl-phosphate (acyl-PO(4)) from acyl-[acyl-carrier-protein] (acyl-ACP). This enzyme utilizes acyl-ACP as fatty acyl donor, but not acyl-CoA. The polypeptide is Phosphate acyltransferase (Nostoc punctiforme (strain ATCC 29133 / PCC 73102)).